The following is a 29-amino-acid chain: Cytochrome b6-f complex subunit 8 (29 aa).

Residues 3–23 (IVSLAWAALMVVFTFSLSLVV) form a helical membrane-spanning segment.

This sequence belongs to the PetN family. In terms of assembly, the 4 large subunits of the cytochrome b6-f complex are cytochrome b6, subunit IV (17 kDa polypeptide, PetD), cytochrome f and the Rieske protein, while the 4 small subunits are PetG, PetL, PetM and PetN. The complex functions as a dimer.

The protein resides in the plastid. It is found in the chloroplast thylakoid membrane. Component of the cytochrome b6-f complex, which mediates electron transfer between photosystem II (PSII) and photosystem I (PSI), cyclic electron flow around PSI, and state transitions. This Solanum bulbocastanum (Wild potato) protein is Cytochrome b6-f complex subunit 8.